A 195-amino-acid chain; its full sequence is Probable GTP-binding protein EngB (195 aa).

The EngB-type G domain maps to 22 to 195 (QLPEIALAGR…WSALSRYIKR (174 aa)). GTP is bound by residues 30-37 (GRSNVGKS), 57-61 (GKTQT), 75-78 (DVPG), 142-145 (TKLD), and 174-176 (FSA). Residues Ser-37 and Thr-59 each contribute to the Mg(2+) site.

This sequence belongs to the TRAFAC class TrmE-Era-EngA-EngB-Septin-like GTPase superfamily. EngB GTPase family. Mg(2+) serves as cofactor.

Its function is as follows. Necessary for normal cell division and for the maintenance of normal septation. The sequence is that of Probable GTP-binding protein EngB from Oceanobacillus iheyensis (strain DSM 14371 / CIP 107618 / JCM 11309 / KCTC 3954 / HTE831).